The chain runs to 760 residues: Catalase-peroxidase (760 aa).

A signal peptide spans 1-45 (MKGTPFRSPHLYQEGSSCMHRTIRSVAAVLTVVLSATIPMVPAWS). The tryptophyl-tyrosyl-methioninium (Trp-Tyr) (with M-271) cross-link spans 124-245 (WHGAGTYRTY…LAATQMGLIY (122 aa)). His125 functions as the Proton acceptor in the catalytic mechanism. The tryptophyl-tyrosyl-methioninium (Tyr-Met) (with W-124) cross-link spans 245–271 (YVNPEGPNGVPDPVAAARDIREAFGGM). Heme b is bound at residue His286.

The protein belongs to the peroxidase family. Peroxidase/catalase subfamily. Homodimer or homotetramer. Requires heme b as cofactor. Post-translationally, formation of the three residue Trp-Tyr-Met cross-link is important for the catalase, but not the peroxidase activity of the enzyme.

The catalysed reaction is H2O2 + AH2 = A + 2 H2O. It catalyses the reaction 2 H2O2 = O2 + 2 H2O. In terms of biological role, bifunctional enzyme with both catalase and broad-spectrum peroxidase activity. The protein is Catalase-peroxidase of Granulibacter bethesdensis (strain ATCC BAA-1260 / CGDNIH1).